The primary structure comprises 84 residues: Large ribosomal subunit protein bL27 (84 aa).

A disordered region spans residues 1-22; the sequence is MAHKKGASSTRNGRDSNAQRLG. The segment covering 7-19 has biased composition (polar residues); that stretch reads ASSTRNGRDSNAQ.

Belongs to the bacterial ribosomal protein bL27 family.

The protein is Large ribosomal subunit protein bL27 of Streptomyces coelicolor (strain ATCC BAA-471 / A3(2) / M145).